Here is a 117-residue protein sequence, read N- to C-terminus: Hainantoxin-XV-4 (117 aa).

The signal sequence occupies residues 1 to 20 (MKLCAVIIASLLVCVAVASS). The tract at residues 20–55 (SSDNQKEFAQEKEMTREETQSLGEHEKDDEVTGSEE) is disordered. Residues 21–56 (SDNQKEFAQEKEMTREETQSLGEHEKDDEVTGSEER) constitute a propeptide that is removed on maturation. Basic and acidic residues predominate over residues 23 to 55 (NQKEFAQEKEMTREETQSLGEHEKDDEVTGSEE). 4 disulfides stabilise this stretch: C58–C72, C65–C78, C69–C115, and C71–C91.

Belongs to the neurotoxin 03 (Tx2) family. 02 subfamily. HNTX-XV sub-subfamily. As to expression, expressed by the venom gland.

Its subcellular location is the secreted. Putative ion channel inhibitor. This chain is Hainantoxin-XV-4, found in Cyriopagopus hainanus (Chinese bird spider).